Consider the following 437-residue polypeptide: Epsilon-sarcoglycan (437 aa).

The Extracellular portion of the chain corresponds to 1-317 (MQLPRWWELG…LKSRDYYTDF (317 aa)). The N-linked (GlcNAc...) asparagine glycan is linked to Asn200. The helical transmembrane segment at 318–338 (LITLAVPSAVALVLFLILAYI) threads the bilayer. At 339-437 (MCCRREGVEK…QQQTTGKWYP (99 aa)) the chain is on the cytoplasmic side.

It belongs to the sarcoglycan alpha/epsilon family. N-glycosylated. In terms of processing, ubiquitinated, leading to its degradation by the proteasome. As to expression, ubiquitous.

It is found in the cell membrane. It localises to the sarcolemma. The protein localises to the cytoplasm. Its subcellular location is the cytoskeleton. The protein resides in the cell projection. It is found in the dendrite. It localises to the golgi apparatus. In terms of biological role, component of the sarcoglycan complex, a subcomplex of the dystrophin-glycoprotein complex which forms a link between the F-actin cytoskeleton and the extracellular matrix. The sequence is that of Epsilon-sarcoglycan (SGCE) from Homo sapiens (Human).